The following is a 288-amino-acid chain: Stomatin (288 aa).

Residues 1-22 (MAEKRHTRDSEAQRLPDSFKDS) form a disordered region. At 1-25 (MAEKRHTRDSEAQRLPDSFKDSPSK) the chain is on the cytoplasmic side. S10 bears the Phosphoserine; by PKA mark. At S18 the chain carries Phosphoserine. Residues 26–54 (GLGPCGWILVAFSFLFTVITFPISIWMCI) lie within the membrane without spanning it. C30 is lipidated: S-palmitoyl cysteine. Over 55–288 (KIIKEYERAI…IIGAKHSHLG (234 aa)) the chain is Cytoplasmic. A lipid anchor (S-palmitoyl cysteine; partial) is attached at C87. Phosphoserine occurs at positions 161 and 244. Positions 265–273 (STIVFPLPI) are required for homooligomerization. A required for lipid raft association region spans residues 267-269 (IVF). The segment at 273 to 287 (IDMLQGIIGAKHSHL) is interaction with LANCL1.

This sequence belongs to the band 7/mec-2 family. As to quaternary structure, homodimer and higher order homooligomer. The homodimer is banana-shaped. Interacts with ASIC1, ASIC2 and ASIC3. Interacts with LANCL1. Interacts with SLC2A1. Interacts with SLC4A1; this interaction positively regulates SLC4A1 activity. Identified in large complexes with SLC40A1, SLC14A1, SLC29A1 and AQP1. Interacts with STOML1; may redistribute STOM from the plasma membrane to late endosomes. Detected in erythrocytes (at protein level). Widely expressed.

The protein resides in the cell membrane. It localises to the cytoplasm. Its subcellular location is the cytoskeleton. The protein localises to the membrane raft. It is found in the melanosome. The protein resides in the cytoplasmic vesicle. In terms of biological role, regulates ion channel activity and transmembrane ion transport. Regulates ASIC2 and ASIC3 channel activity. The chain is Stomatin from Homo sapiens (Human).